A 33-amino-acid chain; its full sequence is Cytochrome b6-f complex subunit 6 (33 aa).

A helical membrane pass occupies residues Ile4–Phe24.

It belongs to the PetL family. The 4 large subunits of the cytochrome b6-f complex are cytochrome b6, subunit IV (17 kDa polypeptide, PetD), cytochrome f and the Rieske protein, while the 4 small subunits are PetG, PetL, PetM and PetN. The complex functions as a dimer.

It is found in the plastid. The protein resides in the chloroplast thylakoid membrane. Functionally, component of the cytochrome b6-f complex, which mediates electron transfer between photosystem II (PSII) and photosystem I (PSI), cyclic electron flow around PSI, and state transitions. PetL is important for photoautotrophic growth as well as for electron transfer efficiency and stability of the cytochrome b6-f complex. This chain is Cytochrome b6-f complex subunit 6, found in Pinus thunbergii (Japanese black pine).